Reading from the N-terminus, the 184-residue chain is Tumor necrosis factor alpha-induced protein 8-like protein 2 (184 aa).

Ser-3 carries the post-translational modification Phosphoserine.

This sequence belongs to the TNFAIP8 family. TNFAIP8L2 subfamily. As to quaternary structure, may interact with CASP8; however, such result is unclear since could not reproduce the interaction with CASP8. Interacts with RAC1. In terms of processing, phosphorylated by TAK1/MAP3K7; this phosphorylation triggers association with BTRC and subsequent ubiquitination and degradation. Ubiquitinated in a BTRC-depdent manner; leading to degradation mediated through the proteasome pathway. Expressed in thymus, spleen, lymph node and small intestine, but not in liver, heart, muscle, testis, spinal cord or brain. Up-regulated in the spinal cord of mice with experimental autoimmune encephalomyelitis. Constitutively expressed by macrophages, B and T-lymphocytes at various developmental stages.

The protein localises to the cytoplasm. The protein resides in the nucleus. It is found in the lysosome. In terms of biological role, acts as a negative regulator of innate and adaptive immunity by maintaining immune homeostasis. Plays a regulatory role in the Toll-like signaling pathway by determining the strength of LPS-induced signaling and gene expression. Inhibits TCR-mediated T-cell activation and negatively regulate T-cell function to prevent hyperresponsiveness. Also inhibits autolysosome formation via negatively modulating MTOR activation by interacting with RAC1 and promoting the disassociation of the RAC1-MTOR complex. Plays an essential role in NK-cell biology by acting as a checkpoint and displaying an expression pattern correlating with NK-cell maturation process and by negatively regulating NK-cell maturation and antitumor immunity. Mechanistically, suppresses IL-15-triggered mTOR activity in NK-cells. This chain is Tumor necrosis factor alpha-induced protein 8-like protein 2 (Tnfaip8l2), found in Mus musculus (Mouse).